Here is a 181-residue protein sequence, read N- to C-terminus: Protein Syd (181 aa).

The protein belongs to the Syd family.

It is found in the cell inner membrane. Functionally, interacts with the SecY protein in vivo. May bind preferentially to an uncomplexed state of SecY, thus functioning either as a chelating agent for excess SecY in the cell or as a regulatory factor that negatively controls the translocase function. This is Protein Syd from Cronobacter sakazakii (strain ATCC BAA-894) (Enterobacter sakazakii).